The following is a 282-amino-acid chain: Secretory carrier-associated membrane protein 3 (282 aa).

Residues Met1–His36 form a disordered region. The Cytoplasmic segment spans residues Met1–Gln117. A coiled-coil region spans residues Leu48–Lys92. Helical transmembrane passes span Tyr118–Thr138, Val148–Leu168, Phe185–Ala205, and Ile230–Ile250. At Gly251 to Phe282 the chain is on the cytoplasmic side.

The protein belongs to the SCAMP family.

It localises to the cell membrane. The protein resides in the cytoplasmic vesicle. The protein localises to the secretory vesicle membrane. Probably involved in membrane trafficking. The protein is Secretory carrier-associated membrane protein 3 (SCAMP3) of Oryza sativa subsp. japonica (Rice).